Consider the following 318-residue polypeptide: Aspartate carbamoyltransferase catalytic subunit (318 aa).

Residues R58 and T59 each contribute to the carbamoyl phosphate site. Position 86 (K86) interacts with L-aspartate. Carbamoyl phosphate-binding residues include R108, H141, and Q144. L-aspartate-binding residues include R174 and R226. 2 residues coordinate carbamoyl phosphate: G270 and P271.

It belongs to the aspartate/ornithine carbamoyltransferase superfamily. ATCase family. Heterododecamer (2C3:3R2) of six catalytic PyrB chains organized as two trimers (C3), and six regulatory PyrI chains organized as three dimers (R2).

The enzyme catalyses carbamoyl phosphate + L-aspartate = N-carbamoyl-L-aspartate + phosphate + H(+). The protein operates within pyrimidine metabolism; UMP biosynthesis via de novo pathway; (S)-dihydroorotate from bicarbonate: step 2/3. In terms of biological role, catalyzes the condensation of carbamoyl phosphate and aspartate to form carbamoyl aspartate and inorganic phosphate, the committed step in the de novo pyrimidine nucleotide biosynthesis pathway. The chain is Aspartate carbamoyltransferase catalytic subunit from Lactobacillus delbrueckii subsp. bulgaricus (strain ATCC 11842 / DSM 20081 / BCRC 10696 / JCM 1002 / NBRC 13953 / NCIMB 11778 / NCTC 12712 / WDCM 00102 / Lb 14).